Consider the following 342-residue polypeptide: Signaling lymphocytic activation molecule (342 aa).

The N-terminal stretch at 1-26 (MDSRGFLSLRCLLVLALASKLSCGTG) is a signal peptide. Over 27–237 (ESLMNCPEVP…CRPESSVPRQ (211 aa)) the chain is Extracellular. Residues 29-138 (LMNCPEVPGK…QHFCLQLKLY (110 aa)) enclose the Ig-like V-type domain. N-linked (GlcNAc...) asparagine glycosylation is found at Asn-57, Asn-102, Asn-125, Asn-150, Asn-157, Asn-189, and Asn-217. Positions 144–223 (PEIKVLNWTQ…PVSNRSWSFN (80 aa)) constitute an Ig-like C2-type domain. 2 disulfide bridges follow: Cys-158–Cys-228 and Cys-164–Cys-209. Residues 238-261 (WRLYAGLFLGGIVGVILIFEVVLL) form a helical membrane-spanning segment. The Cytoplasmic portion of the chain corresponds to 262-342 (LLRRRGKTNH…VYASVTFPES (81 aa)). Residues 282–287 (TIYAQV) carry the ITSM 1 motif. Phosphotyrosine; by FYN is present on residues Tyr-284, Tyr-310, and Tyr-334. The SH2-binding motif lies at 310–315 (YVAATE). The ITSM 2 signature appears at 332 to 337 (TVYASV).

Interacts (via cytoplasmic domain) with SH2D1A and SH2D1B; SH2D1A mediates association with FYN. Interacts (via cytoplasmic domain phosphorylated on tyrosine residues) with INPP5D and PTPN11; presence of SH2D1A facilitates binding to INPP5D. Interacts with MAP4K1. Interacts with PIK3C3, BECN1 and UVRAG; indicative for an association with PI3K complex II (PI3KC3-C2). Interacts with canine distemper virus HN protein; suggesting that it may serve as a receptor. In terms of processing, phosphorylated on tyrosine residues by FYN.

Its subcellular location is the cell membrane. Functionally, self-ligand receptor of the signaling lymphocytic activation molecule (SLAM) family. SLAM receptors triggered by homo- or heterotypic cell-cell interactions are modulating the activation and differentiation of a wide variety of immune cells and thus are involved in the regulation and interconnection of both innate and adaptive immune response. Activities are controlled by presence or absence of small cytoplasmic adapter proteins, SH2D1A/SAP and/or SH2D1B/EAT-2. SLAMF1-induced signal-transduction events in T-lymphocytes are different from those in B-cells. Two modes of SLAMF1 signaling seem to exist: one depending on SH2D1A (and perhaps SH2D1B) and another in which protein-tyrosine phosphatase 2C (PTPN11)-dependent signal transduction operates. Initially it has been proposed that association with SH2D1A prevents binding to inhibitory effectors including INPP5D/SHIP1 and PTPN11/SHP-2. However, signaling is also regulated by SH2D1A which can simultaneously interact with and recruit FYN which subsequently phosphorylates and activates SLAMF1. Mediates IL-2-independent proliferation of activated T cells during immune responses and induces IFN-gamma production. Downstreaming signaling involves INPP5D/SHIP1, DOK1 and DOK2 leading to inhibited IFN-gamma production in T-cells, and PRKCQ, BCL10 and NFKB1 leading to increased T-cell activation and Th2 cytokine production. Promotes T-cell receptor-induced IL-4 secretion by CD4(+) cells. Inhibits antigen receptor-mediated production of IFN-gamma, but not IL-2, in CD4(-)/CD8(-) T-cells. Required for IL-4 production by germinal centers T follicular helper (T(Fh))cells. May inhibit CD40-induced signal transduction in monocyte-derived dendritic cells. May play a role in allergic responses and may regulate allergen-induced Th2 cytokine and Th1 cytokine secretion. In conjunction with SLAMF6 controls the transition between positive selection and the subsequent expansion and differentiation of the thymocytic natural killer T (NKT) cell lineage. Involved in the peripheral differentiation of indifferent natural killer T (iNKT) cells toward a regulatory NKT2 type. In macrophages involved in down-regulation of IL-12, TNF-alpha and nitric oxide in response to lipopolysaccharide (LPS). In B-cells activates the ERK signaling pathway independently of SH2D1A but implicating both, SYK and INPP5D, and activates Akt signaling dependent on SYK and SH2D1A. In conjunction with SLAMF5 and SLAMF6 may be a negative regulator of the humoral immune response. The chain is Signaling lymphocytic activation molecule (SLAMF1) from Canis lupus familiaris (Dog).